Consider the following 336-residue polypeptide: Protein-glutamate methylesterase/protein-glutamine glutaminase 1 (336 aa).

One can recognise a Response regulatory domain in the interval 2–119 (KIAIVNDMPL…GNPQEAAAPL (118 aa)). D53 carries the 4-aspartylphosphate modification. The CheB-type methylesterase domain maps to 147–336 (TASRQRLVAI…APRLLEIFPK (190 aa)). Residues S159, H186, and D279 contribute to the active site.

Belongs to the CheB family. Phosphorylated by CheA. Phosphorylation of the N-terminal regulatory domain activates the methylesterase activity.

The protein resides in the cytoplasm. The catalysed reaction is [protein]-L-glutamate 5-O-methyl ester + H2O = L-glutamyl-[protein] + methanol + H(+). It carries out the reaction L-glutaminyl-[protein] + H2O = L-glutamyl-[protein] + NH4(+). In terms of biological role, involved in chemotaxis. Part of a chemotaxis signal transduction system that modulates chemotaxis in response to various stimuli. Catalyzes the demethylation of specific methylglutamate residues introduced into the chemoreceptors (methyl-accepting chemotaxis proteins or MCP) by CheR. Also mediates the irreversible deamidation of specific glutamine residues to glutamic acid. The sequence is that of Protein-glutamate methylesterase/protein-glutamine glutaminase 1 from Pseudomonas fluorescens (strain Pf0-1).